A 304-amino-acid chain; its full sequence is MQKFDTKTFQGLILTLQDYWARQGCTIVQPLDMEVGAGTSHPMTCLRALGPEPIAAAYVQPSRRPTDGRYGENPNRLQHYYQFQVIIKPSPDNIQELYLGSLKELGLDPLIHDIRFVEDNWENPTLGAWGLGWEVWLNGMEVTQFTYFQQVGGLECKPVTGEITYGLERLAMYIQGVDSVYDLIWCDGPLGTTTYGDIYHQNEVEQSTYNFEYADVDFLFSCFEQYEKEAQSLLALEVPLPLPAYERILKAGHTFNLLDARKAISVTERQRYILRIRTLTKAVAEAYYASREALGFPMCKKNQN.

It belongs to the class-II aminoacyl-tRNA synthetase family. As to quaternary structure, tetramer of two alpha and two beta subunits.

It localises to the cytoplasm. It carries out the reaction tRNA(Gly) + glycine + ATP = glycyl-tRNA(Gly) + AMP + diphosphate. The chain is Glycine--tRNA ligase alpha subunit from Yersinia enterocolitica serotype O:8 / biotype 1B (strain NCTC 13174 / 8081).